A 196-amino-acid polypeptide reads, in one-letter code: Molybdenum cofactor guanylyltransferase (196 aa).

Residues 10–12 (LAG), Lys-23, Asn-51, Asp-69, and Asp-99 each bind GTP. Asp-99 is a Mg(2+) binding site.

This sequence belongs to the MobA family. Monomer. Requires Mg(2+) as cofactor.

The protein localises to the cytoplasm. The enzyme catalyses Mo-molybdopterin + GTP + H(+) = Mo-molybdopterin guanine dinucleotide + diphosphate. Transfers a GMP moiety from GTP to Mo-molybdopterin (Mo-MPT) cofactor (Moco or molybdenum cofactor) to form Mo-molybdopterin guanine dinucleotide (Mo-MGD) cofactor. The protein is Molybdenum cofactor guanylyltransferase of Shewanella baltica (strain OS185).